The primary structure comprises 455 residues: Adenylosuccinate synthetase isozyme 2 (455 aa).

Residues Met-1 to Val-25 form a disordered region. The span at Gly-12–Val-25 shows a compositional bias: low complexity. Residues Gly-38 to Lys-44 and Gly-66 to Thr-68 each bind GTP. Asp-39 functions as the Proton acceptor in the catalytic mechanism. Mg(2+) is bound by residues Asp-39 and Gly-66. Asp-39 contributes to the substrate binding site. Residues Asp-39–Lys-42, Asn-64–His-67, Thr-161, Arg-175, Asn-254, Thr-269, and Arg-333 each bind IMP. The active-site Proton donor is His-67. Val-329–Arg-335 provides a ligand contact to substrate. Residues Arg-335, Lys-361–Asp-363, and Gly-443–Lys-446 contribute to the GTP site.

This sequence belongs to the adenylosuccinate synthetase family. As to quaternary structure, homodimer. It depends on Mg(2+) as a cofactor.

It is found in the cytoplasm. Its subcellular location is the mitochondrion. It catalyses the reaction IMP + L-aspartate + GTP = N(6)-(1,2-dicarboxyethyl)-AMP + GDP + phosphate + 2 H(+). It participates in purine metabolism; AMP biosynthesis via de novo pathway; AMP from IMP: step 1/2. With respect to regulation, inhibited competitively by AMP and IMP and non-competitively by fructose 1,6-bisphosphate. Functionally, plays an important role in the de novo pathway and in the salvage pathway of purine nucleotide biosynthesis. Catalyzes the first committed step in the biosynthesis of AMP from IMP. The polypeptide is Adenylosuccinate synthetase isozyme 2 (adss2) (Danio rerio (Zebrafish)).